The following is a 468-amino-acid chain: Cysteine--tRNA ligase (468 aa).

Cys33 contacts Zn(2+). A 'HIGH' region motif is present at residues 35-45; sequence ATVQGLPHIGH. Zn(2+) contacts are provided by Cys211, His236, and Glu240. A 'KMSKS' region motif is present at residues 267 to 271; the sequence is KMSKS. Lys270 contacts ATP.

This sequence belongs to the class-I aminoacyl-tRNA synthetase family. In terms of assembly, monomer. Zn(2+) is required as a cofactor.

It is found in the cytoplasm. The enzyme catalyses tRNA(Cys) + L-cysteine + ATP = L-cysteinyl-tRNA(Cys) + AMP + diphosphate. The sequence is that of Cysteine--tRNA ligase from Mycolicibacterium paratuberculosis (strain ATCC BAA-968 / K-10) (Mycobacterium paratuberculosis).